We begin with the raw amino-acid sequence, 205 residues long: Probable thymidylate kinase (205 aa).

7–14 lines the ATP pocket; the sequence is GIDGAGKS.

Belongs to the thymidylate kinase family.

The enzyme catalyses dTMP + ATP = dTDP + ADP. The sequence is that of Probable thymidylate kinase from Thermococcus onnurineus (strain NA1).